A 138-amino-acid polypeptide reads, in one-letter code: uncharacterized protein (138 aa).

This is an uncharacterized protein from Bacillus subtilis (strain 168).